The following is a 787-amino-acid chain: Disintegrin and metalloproteinase domain-containing protein 32 (787 aa).

The N-terminal stretch at 1–16 (MFRLWLLLAGLCGLLA) is a signal peptide. Position 17 is a phosphoserine (Ser17). A propeptide spanning residues 17 to 174 (SRPGFQNSLL…PMDDNIFISE (158 aa)) is cleaved from the precursor. N-linked (GlcNAc...) asparagine glycosylation is found at Asn39 and Asn125. Topologically, residues 175 to 682 (KSEPAVPDLF…ERASGKTENT (508 aa)) are extracellular. Positions 186-383 (LYLEMHIVVD…VGVKCLQNKP (198 aa)) constitute a Peptidase M12B domain. 4 cysteine pairs are disulfide-bonded: Cys295–Cys378, Cys337–Cys362, Cys339–Cys344, and Cys450–Cys471. One can recognise a Disintegrin domain in the interval 391-479 (KPVCGNGRLE…ECGPDITLIN (89 aa)). N-linked (GlcNAc...) asparagine glycosylation is found at Asn465 and Asn598. The EGF-like domain maps to 622–654 (SAHVCSQQCSGHGVCDSRNKCHCSPGYKPPNCQ). Cystine bridges form between Cys626-Cys636, Cys630-Cys642, and Cys644-Cys653. The helical transmembrane segment at 683–703 (WLLGFLIALPILIVTTAIVLA) threads the bilayer. Topologically, residues 704–787 (RKQLKKWFAK…DSTQTQSSSN (84 aa)) are cytoplasmic. Positions 715 to 787 (EEFPSSESKS…DSTQTQSSSN (73 aa)) are disordered. A compositionally biased stretch (polar residues) spans 728-749 (TQTYASQSSSEGSTQTYASQTR). The segment covering 771-787 (TSRSKSQDSTQTQSSSN) has biased composition (low complexity).

In terms of tissue distribution, testis specific.

It is found in the membrane. In terms of biological role, may play a role in sperm development and fertilization This is a non-catalytic metalloprotease-like protein. The sequence is that of Disintegrin and metalloproteinase domain-containing protein 32 (ADAM32) from Homo sapiens (Human).